A 219-amino-acid polypeptide reads, in one-letter code: UPF0502 protein Gura_0277 (219 aa).

Belongs to the UPF0502 family.

This is UPF0502 protein Gura_0277 from Geotalea uraniireducens (strain Rf4) (Geobacter uraniireducens).